The primary structure comprises 348 residues: D-alanine--D-alanine ligase (348 aa).

Positions 132–334 (KRVLESAGIA…YPDLIEKLVA (203 aa)) constitute an ATP-grasp domain. Residue 162–217 (EEKLSYPVFTKPSNMGSSVGISKSDNQEELRASLDLAFKYDSRVLVEQGVTAREIE) participates in ATP binding. Residues D288, E301, and N303 each contribute to the Mg(2+) site.

Belongs to the D-alanine--D-alanine ligase family. Mg(2+) serves as cofactor. Requires Mn(2+) as cofactor.

The protein localises to the cytoplasm. It catalyses the reaction 2 D-alanine + ATP = D-alanyl-D-alanine + ADP + phosphate + H(+). Its pathway is cell wall biogenesis; peptidoglycan biosynthesis. In terms of biological role, cell wall formation. This Streptococcus gordonii (strain Challis / ATCC 35105 / BCRC 15272 / CH1 / DL1 / V288) protein is D-alanine--D-alanine ligase.